Reading from the N-terminus, the 179-residue chain is MEKLIKDGEELNRTLDRMAHEILEKHEIDNTLALVGIRTRGIYIARRLMEKIKKITGKDVLYGELDITLYRDDLSQVAEQPVLKATNIPFDITGKTIILTDDVLYTGRTIRSALAALSDFGRPSRIELAVIVDRGHRELPIKADYVGKNLPTAKTEIVHIKLKEYDGEDSITLLVKNND.

The PRPP-binding signature appears at 97-109 (IILTDDVLYTGRT).

Belongs to the purine/pyrimidine phosphoribosyltransferase family. PyrR subfamily.

It catalyses the reaction UMP + diphosphate = 5-phospho-alpha-D-ribose 1-diphosphate + uracil. Functionally, regulates the transcription of the pyrimidine nucleotide (pyr) operon in response to exogenous pyrimidines. Its function is as follows. Also displays a weak uracil phosphoribosyltransferase activity which is not physiologically significant. In Elusimicrobium minutum (strain Pei191), this protein is Bifunctional protein PyrR.